The sequence spans 570 residues: Coiled-coil domain-containing protein 22 homolog (570 aa).

2 disordered regions span residues Arg-110 to Leu-129 and Leu-234 to Leu-280. Positions Thr-248 to Ala-257 are enriched in polar residues. The span at Ser-265–Thr-276 shows a compositional bias: low complexity. Coiled coils occupy residues Glu-308–Gln-471 and Gly-529–Gly-570.

The protein belongs to the CCDC22 family.

This chain is Coiled-coil domain-containing protein 22 homolog, found in Drosophila willistoni (Fruit fly).